The sequence spans 133 residues: Small ribosomal subunit protein uS8 (133 aa).

It belongs to the universal ribosomal protein uS8 family. Part of the 30S ribosomal subunit. Contacts proteins S5 and S12.

In terms of biological role, one of the primary rRNA binding proteins, it binds directly to 16S rRNA central domain where it helps coordinate assembly of the platform of the 30S subunit. The polypeptide is Small ribosomal subunit protein uS8 (Endomicrobium trichonymphae).